We begin with the raw amino-acid sequence, 557 residues long: uncharacterized protein (557 aa).

Residues 17 to 38 (NSAEFSIHSTSNPTNPEEPNIT) form a disordered region. 9 helical membrane-spanning segments follow: residues 60-80 (LSLFSVFSVSFSLLGLLPSVA), 94-114 (GLLWGWLIAMVFIICIALSMA), 214-234 (SVGTYLNTLFLFISMIVILAM), 261-281 (FAILMSFCGVIWTMSGYDAPF), 297-317 (GIILTAAIGGIMGWVMQIVIA), 348-368 (LGILSLTIVSSFLMGQSNLIA), 407-427 (VIGVLILFLAFAGAITIGAVF), 468-488 (IGFCSVSFVALMIPILCFPSV), and 498-518 (WTCLVFGAPMLAVLIWYAISG).

The protein belongs to the amino acid-polyamine-organocation (APC) superfamily.

The protein resides in the membrane. This is an uncharacterized protein from Schizosaccharomyces pombe (strain 972 / ATCC 24843) (Fission yeast).